A 191-amino-acid chain; its full sequence is Dirigent protein 3 (191 aa).

The N-terminal stretch at 1–21 (MSKLILILTAQILLLTATALA) is a signal peptide. Asparagine 96 and asparagine 131 each carry an N-linked (GlcNAc...) asparagine glycan.

The protein belongs to the plant dirigent protein family. Homodimer.

The protein resides in the secreted. It is found in the extracellular space. Its subcellular location is the apoplast. Functionally, dirigent proteins impart stereoselectivity on the phenoxy radical-coupling reaction, yielding optically active lignans from two molecules of coniferyl alcohol in the biosynthesis of lignans, flavonolignans, and alkaloids and thus plays a central role in plant secondary metabolism. In Arabidopsis thaliana (Mouse-ear cress), this protein is Dirigent protein 3 (DIR3).